Consider the following 396-residue polypeptide: Enoyl-[acyl-carrier-protein] reductase [NADH] (396 aa).

NAD(+) is bound by residues 48–53, 74–75, 111–112, and 139–140; these read GASTGY, FE, DA, and LA. Tyr225 is a substrate binding site. Tyr235 functions as the Proton donor in the catalytic mechanism. NAD(+) contacts are provided by residues Lys244 and 273-275; that span reads VVT.

It belongs to the TER reductase family. As to quaternary structure, monomer.

The catalysed reaction is a 2,3-saturated acyl-[ACP] + NAD(+) = a (2E)-enoyl-[ACP] + NADH + H(+). Its pathway is lipid metabolism; fatty acid biosynthesis. Involved in the final reduction of the elongation cycle of fatty acid synthesis (FAS II). Catalyzes the reduction of a carbon-carbon double bond in an enoyl moiety that is covalently linked to an acyl carrier protein (ACP). The sequence is that of Enoyl-[acyl-carrier-protein] reductase [NADH] from Teredinibacter turnerae (strain ATCC 39867 / T7901).